We begin with the raw amino-acid sequence, 735 residues long: Mitochondrial potassium channel ATP-binding subunit (735 aa).

A mitochondrion-targeting transit peptide spans 1–25; sequence MLVHLFRVGIRGGPFPGRLLPPLRF. Residues 26–144 are Mitochondrial matrix-facing; it reads QTFSAVRNTW…KLFWQFLHPH (119 aa). Residues 145–165 form a helical membrane-spanning segment; the sequence is LLVLGVAVVLALGAALVNVQI. The ABC transmembrane type-1 domain occupies 150–437; it reads VAVVLALGAA…LSVLFGQVVR (288 aa). Residues 166 to 195 are Mitochondrial intermembrane-facing; sequence PLLLGQLVEVVAKYTRDHVGSFMTESQNLS. Residues 196-216 form a helical membrane-spanning segment; it reads THLLILYGVQGLLTFGYLVLL. The Mitochondrial matrix portion of the chain corresponds to 217–295; the sequence is SHVGERMAVD…SLSMLSTRLT (79 aa). The chain crosses the membrane as a helical span at residues 296 to 316; it reads LLLMVATPALMGVGTLMGSGL. The Mitochondrial intermembrane segment spans residues 317–735; sequence RKLSRQCQEQ…EGPRSHQHKS (419 aa). One can recognise an ABC transporter domain in the interval 472-709; that stretch reads VTFQNVCFSY…GGLYAELIRR (238 aa). Residue 507–514 participates in ATP binding; it reads GQSGGGKT. The segment at 712 to 735 is disordered; that stretch reads LDAPRTAAPPPKKPEGPRSHQHKS.

Belongs to the ABC transporter superfamily. ABCB family. Multidrug resistance exporter (TC 3.A.1.201) subfamily. The mitochondrial potassium channel (mitoK(ATP)) is composed of 4 subunits of CCDC51/MITOK and 4 subunits of ABCB8/MITOSUR. Interacts with C10orf88/PAAT. Interacts with NRP1; NRP1 regulates ABCB8/MITOSUR protein levels in mitochondria. Ubiquitous.

It localises to the mitochondrion inner membrane. Channel activity inhibited by ATP via ABCB8/MITOSUR subunit. In terms of biological role, ATP-binding subunit of the mitochondrial ATP-gated potassium channel (mitoK(ATP)). Together with pore-forming subunit CCDC51/MITOK of the mitoK(ATP) channel, mediates ATP-dependent potassium currents across the mitochondrial inner membrane. An increase in ATP intracellular levels closes the channel, inhibiting K(+) transport, whereas a decrease in ATP levels enhances K(+) uptake in the mitochondrial matrix. Plays a role in mitochondrial iron transport. Required for maintenance of normal cardiac function, possibly by influencing mitochondrial iron export and regulating the maturation of cytosolic iron sulfur cluster-containing enzymes. In Homo sapiens (Human), this protein is Mitochondrial potassium channel ATP-binding subunit.